The chain runs to 692 residues: Vacuolar amino acid transporter 3 (692 aa).

A compositionally biased stretch (polar residues) spans 1–14; that stretch reads MNGKEVSSGSGRTQ. The segment at 1 to 71 is disordered; the sequence is MNGKEVSSGS…TGGLLKKPPL (71 aa). The segment covering 15-24 has biased composition (low complexity); it reads SNNNKKNNNG. Residues 28–38 show a composition bias toward polar residues; the sequence is GISHASGSPLT. Ser-59, Ser-119, and Ser-121 each carry phosphoserine. Disordered regions lie at residues 135-170 and 258-294; these read KWTN…SNRK and DLSE…GRHP. Residues 141–153 show a composition bias toward low complexity; the sequence is PSSPSQYQYPSQP. Residues 154-167 show a composition bias toward polar residues; the sequence is ALSTSIPSQAPSFS. Ser-165 is subject to Phosphoserine. Acidic residues predominate over residues 258–279; the sequence is DLSEEEEEEEETEEEPEEEALE. Transmembrane regions (helical) follow at residues 302–322, 329–349, 374–394, 412–432, 443–463, 483–503, 519–539, 561–581, 607–627, 630–650, and 665–685; these read AVLL…PKAF, FSAL…VSLI, FAIL…YTVF, GSIS…PLSL, ALIA…YSIY, WSLF…LIPI, AVMC…YAAF, VQLL…FPAI, YFRC…ANDL, FVSL…PPLL, and LLLD…TSWQ.

It belongs to the amino acid/polyamine transporter 2 family.

The protein localises to the vacuole membrane. In terms of biological role, involved in amino acid efflux from the vacuole to the cytoplasm. Capable of transporting large neutral amino acids including tyrosine, glutamine, asparagine, isoleucine and leucine. In Saccharomyces cerevisiae (strain ATCC 204508 / S288c) (Baker's yeast), this protein is Vacuolar amino acid transporter 3 (AVT3).